The following is an 859-amino-acid chain: Bifunctional levopimaradiene synthase, chloroplastic (859 aa).

The transit peptide at 1–70 (MALLSSSLSS…IACVGEDSLS (70 aa)) directs the protein to the chloroplast. Lys259 is a substrate binding site. Mg(2+)-binding residues include Asp392 and Asp394. Positions 392–395 (DIDD) match the DXDD motif motif. Lys479 lines the substrate pocket. Asp611, Asp615, Asn755, Thr759, and Glu763 together coordinate Mg(2+). The DDXXD motif motif lies at 611-615 (DDLYD).

It belongs to the terpene synthase family. Tpsd subfamily. It depends on Mg(2+) as a cofactor.

It localises to the plastid. Its subcellular location is the chloroplast. The catalysed reaction is (2E,6E,10E)-geranylgeranyl diphosphate = (+)-copalyl diphosphate. It carries out the reaction (+)-copalyl diphosphate = abieta-8(14),12-diene + diphosphate. It participates in terpene metabolism; oleoresin biosynthesis. Functionally, involved in defensive oleoresin formation in conifers in response to insect attack or other injury. Involved in diterpene (C20) olefins biosynthesis. Bifunctional enzyme that catalyzes two sequential cyclizations of geranylgeranyl diphosphate (GGPP) to levopimaradiene. Levopimaradiene is the major products of the enzyme followed by abietadiene, neoabietadiene and palustradiene. The chain is Bifunctional levopimaradiene synthase, chloroplastic (TPS-LAS) from Picea abies (Norway spruce).